We begin with the raw amino-acid sequence, 37 residues long: MKIRASVRKICTKCRLIRRRGRIRVICSNPKHKQRQG.

The protein belongs to the bacterial ribosomal protein bL36 family.

The protein resides in the plastid. It localises to the chloroplast. This chain is Large ribosomal subunit protein bL36c, found in Lolium perenne (Perennial ryegrass).